The primary structure comprises 279 residues: Stathmin domain-containing protein 1 (279 aa).

Disordered regions lie at residues methionine 1 to lysine 110 and alanine 178 to methionine 254. Glycine 2 is lipidated: N-myristoyl glycine. Over residues lysine 22–valine 32 the composition is skewed to basic and acidic residues. The segment covering valine 34–threonine 45 has biased composition (polar residues). Residues glutamine 121–glutamate 248 enclose the SLD domain. Basic and acidic residues-rich tracts occupy residues alanine 178 to arginine 191 and glutamate 232 to leucine 242.

This is Stathmin domain-containing protein 1 (Stmnd1) from Mus musculus (Mouse).